The primary structure comprises 537 residues: Sodium/hydrogen exchanger 9B2 (537 aa).

Basic and acidic residues predominate over residues 1–10 (MGDEDKRITY). A disordered region spans residues 1 to 28 (MGDEDKRITYEDSEPSTGMNYTPSMHQE). Topologically, residues 1-86 (MGDEDKRITY…ACPPHGLLDR (86 aa)) are cytoplasmic. Residues 15-27 (PSTGMNYTPSMHQ) are compositionally biased toward polar residues. Residue S49 is modified to Phosphoserine. Residues 87–104 (VITNVTIIVLLWAVVWSI) traverse the membrane as a helical segment. Residues 105-113 (TGSECLPGG) are Extracellular-facing. Residues 114-133 (NLFGIIILFYCAIIGGKLLG) traverse the membrane as a helical segment. Residues 134 to 144 (LIKLPTLPPLP) are Cytoplasmic-facing. Residues 145–161 (SLLGMLLAGFLIRNIPV) form a helical membrane-spanning segment. Residues 162–171 (INDNVQIKHK) lie on the Extracellular side of the membrane. A helical membrane pass occupies residues 172-189 (WSSSLRSIALSIILVRAG). The Cytoplasmic segment spans residues 190–200 (LGLDSKALKKL). The helical transmembrane segment at 201–227 (KGVCVRLSMGPCIVEACTSALLAHYLL) threads the bilayer. Over 228–233 (GLPWQW) the chain is Extracellular. The chain crosses the membrane as a helical span at residues 234–242 (GFILGFVLG). Over 243–270 (AVSPAVVVPSMLLLQGGGYGVEKGVPTL) the chain is Cytoplasmic. Residues V244, G275, D278, and D279 each coordinate Na(+). A helical transmembrane segment spans residues 271–290 (LMAAGSFDDILAITGFNTCL). The Extracellular portion of the chain corresponds to 291-300 (GIAFSTGSTV). The chain crosses the membrane as a helical span at residues 301–324 (FNVLRGVLEVVIGVATGSVLGFFI). The Cytoplasmic portion of the chain corresponds to 325-339 (QYFPSRDQDKLVCKR). A helical membrane pass occupies residues 340–357 (TFLVLGLSVLAVFSSVHF). Residues 358-361 (GFPG) are Extracellular-facing. The helical transmembrane segment at 362 to 373 (SGGLCTLVMAFL) threads the bilayer. The Cytoplasmic portion of the chain corresponds to 374–390 (AGMGWTSEKAEVEKIIA). The chain crosses the membrane as a helical span at residues 391–411 (VAWDIFQPLLFGLIGAEVSIA). At 412-417 (SLRPET) the chain is on the extracellular side. Residues 418-440 (VGLCVATVGIAVLIRILTTFLMV) traverse the membrane as a helical segment. Residues 441–461 (CFAGFNLKEKIFISFAWLPKA) lie on the Cytoplasmic side of the membrane. Residues 462 to 473 (TVQAAIGSVALD) traverse the membrane as a helical segment. At 474 to 486 (TARSHGEKQLEDY) the chain is on the extracellular side. A helical transmembrane segment spans residues 487–509 (GMDVLTVAFLSILITAPIGSLLI). Residues 510–537 (GLLGPRLLQKVEHQNKDEEVQGETSVQV) lie on the Cytoplasmic side of the membrane.

Belongs to the monovalent cation:proton antiporter 1 (CPA1) transporter (TC 2.A.36) family. Homodimer. Dimerization is essential for SLC9B2 activity. Lipids seem to play a role in the stabilization of the dimerization subdomain. In terms of tissue distribution, widely expressed. High levels detected in the distal tubules of the kidney nephron. Detected in red blood cells (at protein level).

It is found in the cell membrane. Its subcellular location is the mitochondrion membrane. The protein resides in the endosome membrane. The protein localises to the recycling endosome membrane. It localises to the cytoplasmic vesicle. It is found in the secretory vesicle. Its subcellular location is the synaptic vesicle membrane. The protein resides in the cell projection. The protein localises to the cilium. It localises to the flagellum membrane. It is found in the basolateral cell membrane. Its subcellular location is the apical cell membrane. The catalysed reaction is Li(+)(out) + H(+)(in) = Li(+)(in) + H(+)(out). It carries out the reaction Li(+)(in) + Na(+)(out) = Li(+)(out) + Na(+)(in). The enzyme catalyses Na(+)(in) + H(+)(out) = Na(+)(out) + H(+)(in). With respect to regulation, allosterically inhibited by the N-terminal domain. Inhibited by phloretin. Its function is as follows. Electroneutral Na(+) Li(+)/H(+) antiporter that extrudes Na(+) or Li(+) in exchange for external protons across the membrane. Uses the proton gradient/membrane potential to extrude sodium. Contributes to the regulation of intracellular pH and sodium homeostasis. Also able to mediate Na(+)/Li(+) antiporter activity in kidney. May play a physiological role in renal tubular function and blood pressure homeostasis. Plays an important role for insulin secretion and clathrin-mediated endocytosis in beta-cells. Involved in sperm motility and fertility. It is controversial whether SLC9B2 plays a role in osteoclast differentiation or not. This is Sodium/hydrogen exchanger 9B2 from Homo sapiens (Human).